The sequence spans 143 residues: Peptidyl-prolyl cis-trans isomerase FKBP15-3 (143 aa).

In terms of domain architecture, PPIase FKBP-type spans 56-143 (GKRVSVHYTG…VFDVELLNVK (88 aa)).

It belongs to the FKBP-type PPIase family.

It catalyses the reaction [protein]-peptidylproline (omega=180) = [protein]-peptidylproline (omega=0). Its function is as follows. PPIases accelerate the folding of proteins. It catalyzes the cis-trans isomerization of proline imidic peptide bonds in oligopeptides. The sequence is that of Peptidyl-prolyl cis-trans isomerase FKBP15-3 (FKBP15-3) from Arabidopsis thaliana (Mouse-ear cress).